The primary structure comprises 269 residues: Aquaporin-1 (269 aa).

At 2 to 11 the chain is on the cytoplasmic side; that stretch reads ASEFKKKLFW. The helical transmembrane segment at 12–29 threads the bilayer; sequence RAVVAEFLATTLFVFISI. Residues 30-46 lie on the Extracellular side of the membrane; the sequence is GSALGFKYPVGNNQTAV. The N-linked (GlcNAc...) asparagine glycan is linked to asparagine 42. A helical membrane pass occupies residues 47–65; it reads QDNVKVSLAFGLSIATLAQ. Over 66–68 the chain is Cytoplasmic; that stretch reads SVG. An intramembrane segment occupies 69 to 82; the sequence is HISGAHLNPAVTLG. Residues 76–78 carry the NPA 1 motif; sequence NPA. At 83–90 the chain is on the cytoplasmic side; that stretch reads LLLSCQIS. Residues 91-109 traverse the membrane as a helical segment; it reads IFRALMYIIAQCVGAIVAT. Topologically, residues 110–133 are extracellular; that stretch reads AILSGITSSLTGNSLGRNDLADGV. A helical transmembrane segment spans residues 134-153; that stretch reads NSGQGLGIEIIGTLQLVLCV. Topologically, residues 154–163 are cytoplasmic; sequence LATTDRRRRD. A helical transmembrane segment spans residues 164 to 181; that stretch reads LGGSAPLAIGLSVALGHL. At 182 to 186 the chain is on the extracellular side; it reads LAIDY. An intramembrane segment occupies 187 to 199; sequence TGCGINPARSFGS. The short motif at 192–194 is the NPA 2 element; sequence NPA. The Extracellular portion of the chain corresponds to 200-206; that stretch reads AVITHNF. N-linked (GlcNAc...) asparagine glycosylation is present at asparagine 205. Residues 207 to 224 form a helical membrane-spanning segment; the sequence is SNHWIFWVGPFIGGALAV. At 225-269 the chain is on the cytoplasmic side; sequence LIYDFILAPRSSDLTDRVKVWTSGQVEEYDLDADDINSRVEMKPK. Serine 247 is modified (phosphoserine). A Phosphotyrosine modification is found at tyrosine 253. Phosphoserine is present on serine 262.

It belongs to the MIP/aquaporin (TC 1.A.8) family. As to quaternary structure, homotetramer; each monomer provides an independent water pore. Component of the ankyrin-1 complex in the erythrocyte, composed of ANK1, RHCE, RHAG, SLC4A1, EPB42, GYPA, GYPB and AQP1. Interacts with EPHB2; involved in endolymph production in the inner ear. Identified in a complex with STOM. Interacts (via the N-terminal) with ANK1 (via ANK 1-5 repeats). Interacts (via the C-terminal) with EPB42. Detected in erythrocytes (at protein level). Expressed in a number of tissues including erythrocytes, renal tubules, retinal pigment epithelium, heart, lung, skeletal muscle, kidney and pancreas. Weakly expressed in brain, placenta and liver.

The protein resides in the cell membrane. It catalyses the reaction H2O(in) = H2O(out). It carries out the reaction nitric oxide(out) = nitric oxide(in). The enzyme catalyses CO2(out) = CO2(in). The catalysed reaction is glycerol(in) = glycerol(out). It catalyses the reaction H2O2(out) = H2O2(in). It carries out the reaction K(+)(in) = K(+)(out). The enzyme catalyses Na(+)(in) = Na(+)(out). The water channel activity is inhibited by P-choloromercuribenzene sulphonate and diethylpyrocarbonate(DPPC). The glycerol channel activity is inhibited by P-choloromercuribenzene sulphonate, diethylpyrocarbonate(DPPC), phloretin and Cu(2+). Inhibited by mercury. In terms of biological role, forms a water channel that facilitates the transport of water across cell membranes, playing a crucial role in water homeostasis in various tissues. Could also be permeable to small solutes including hydrogen peroxide, glycerol and gases such as amonnia (NH3), nitric oxide (NO) and carbon dioxide (CO2). Recruited to the ankyrin-1 complex, a multiprotein complex of the erythrocyte membrane, it could be part of a CO2 metabolon, linking facilitated diffusion of CO2 across the membrane, anion exchange of Cl(-)/HCO3(-) and interconversion of dissolved CO2 and carbonic acid in the cytosol. In vitro, it shows non-selective gated cation channel activity and may be permeable to cations like K(+) and Na(+) in vivo. In Homo sapiens (Human), this protein is Aquaporin-1.